A 61-amino-acid chain; its full sequence is Small ribosomal subunit protein uS14B (61 aa).

Residues Cys-24, Cys-27, Cys-40, and Cys-43 each coordinate Zn(2+).

Belongs to the universal ribosomal protein uS14 family. Zinc-binding uS14 subfamily. As to quaternary structure, part of the 30S ribosomal subunit. Contacts proteins S3 and S10. The cofactor is Zn(2+).

In terms of biological role, binds 16S rRNA, required for the assembly of 30S particles and may also be responsible for determining the conformation of the 16S rRNA at the A site. This Levilactobacillus brevis (strain ATCC 367 / BCRC 12310 / CIP 105137 / JCM 1170 / LMG 11437 / NCIMB 947 / NCTC 947) (Lactobacillus brevis) protein is Small ribosomal subunit protein uS14B.